A 980-amino-acid chain; its full sequence is Putative formate dehydrogenase YrhE (980 aa).

The 2Fe-2S ferredoxin-type domain maps to 5-81 (KSISVRVDGT…GMSIDLSGNR (77 aa)). 4 residues coordinate [2Fe-2S] cluster: C39, C50, C53, and C65. Residues 81 to 121 (RVKEAQTEAMDRLLENHLLYCTVCDNNNGNCTLHNTAEMMG) enclose the 4Fe-4S His(Cys)3-ligated-type domain. [4Fe-4S] cluster contacts are provided by H97, C101, C104, C111, C153, C156, C159, C163, C196, C199, C202, C206, C270, C273, C277, and C305. 2 4Fe-4S ferredoxin-type domains span residues 144 to 171 (PFYR…VNET) and 187 to 216 (EGVP…EKSM). Residues 258–980 (MRETRTKKTK…NRPGYVHLTD (723 aa)) are formate dehydrogenase. Residues 263 to 319 (TKKTKTVCTFCGVGCSFEVWTKGRDILKIQPVSDAPVNAISTCVKGKFGWDFVNSKE) enclose the 4Fe-4S Mo/W bis-MGD-type domain. Residues 944–980 (ETAPLPKTNPRNKKRHPQNGVEAERKWNRPGYVHLTD) form a disordered region.

The protein in the C-terminal section; belongs to the prokaryotic molybdopterin-containing oxidoreductase family. [2Fe-2S] cluster is required as a cofactor. [4Fe-4S] cluster serves as cofactor. It depends on Mo-bis(molybdopterin guanine dinucleotide) as a cofactor.

The enzyme catalyses formate + NAD(+) = CO2 + NADH. This Bacillus subtilis (strain 168) protein is Putative formate dehydrogenase YrhE (yrhE).